The sequence spans 538 residues: MEIERESSERGSISWRASAAHDQDAKKLDADDQLLMKEPAWKRFLAHVGPGFMVSLAYLDPGNLETDLQAGANHRYELLWVILIGLIFALIIQSLAANLGVVTGRHLAEICKSEYPKFVKIFLWLLAELAVIAADIPEVIGTAFAFNILFHIPVWVGVLITGTSTLLLLGLQKYGVRKLEFLISMLVFVMAACFFGELSIVKPPAKEVMKGLFIPRLNGDGATADAIALLGALVMPHNLFLHSALVLSRKTPASVRGIKDGCRFFLYESGFALFVALLINIAVVSVSGTACSSANLSQEDADKCANLSLDTSSFLLKNVLGKSSAIVYGVALLASGQSSTITGTYAGQYIMQGFLDIRMRKWLRNLMTRTIAIAPSLIVSIIGGSRGAGRLIIIASMILSFELPFALIPLLKFSSSKSKMGPHKNSIYIIVFSWFLGLLIIGINMYFLSTSFVGWLIHNDLPKYANVLVGAAVFPFMLVYIVAVVYLTIRKDSVVTFVADSSLAAVVDAEKADAGDLAVDDDEPLPYRDDLADIPLPR.

A run of 12 helical transmembrane segments spans residues 44–64, 77–97, 118–138, 140–160, 181–201, 227–247, 264–284, 324–346, 365–385, 391–411, 427–447, and 467–487; these read FLAHVGPGFMVSLAYLDPGNL, ELLWVILIGLIFALIIQSLAA, FVKIFLWLLAELAVIAADIPE, IGTAFAFNILFHIPVWVGVLI, FLISMLVFVMAACFFGELSIV, IALLGALVMPHNLFLHSALVL, FFLYESGFALFVALLINIAVV, SAIVYGVALLASGQSSTITGTYA, NLMTRTIAIAPSLIVSIIGGS, LIIIASMILSFELPFALIPLL, IYIIVFSWFLGLLIIGINMYF, and VLVGAAVFPFMLVYIVAVVYL. The interval 518–538 is disordered; it reads AVDDDEPLPYRDDLADIPLPR.

It belongs to the NRAMP (TC 2.A.55) family.

The protein resides in the membrane. In terms of biological role, probable metal transporter. The polypeptide is Metal transporter Nramp5 (NRAMP5) (Oryza sativa subsp. japonica (Rice)).